Here is a 425-residue protein sequence, read N- to C-terminus: Glucose-6-phosphate 1-dehydrogenase (425 aa).

NADP(+)-binding residues include R44 and K135. H165, K169, E201, and D220 together coordinate substrate. H225 serves as the catalytic Proton acceptor. Residue K311 coordinates substrate.

It belongs to the glucose-6-phosphate dehydrogenase family.

It carries out the reaction D-glucose 6-phosphate + NADP(+) = 6-phospho-D-glucono-1,5-lactone + NADPH + H(+). It functions in the pathway carbohydrate degradation; pentose phosphate pathway; D-ribulose 5-phosphate from D-glucose 6-phosphate (oxidative stage): step 1/3. In terms of biological role, catalyzes the oxidation of glucose 6-phosphate to 6-phosphogluconolactone. The chain is Glucose-6-phosphate 1-dehydrogenase from Helicobacter pylori (strain J99 / ATCC 700824) (Campylobacter pylori J99).